We begin with the raw amino-acid sequence, 169 residues long: Ribosome maturation factor RimM (169 aa).

The region spanning 97–169 (EDEVYFKDLI…KIVVDWEYDY (73 aa)) is the PRC barrel domain.

This sequence belongs to the RimM family. Binds ribosomal protein uS19.

Its subcellular location is the cytoplasm. An accessory protein needed during the final step in the assembly of 30S ribosomal subunit, possibly for assembly of the head region. Essential for efficient processing of 16S rRNA. May be needed both before and after RbfA during the maturation of 16S rRNA. It has affinity for free ribosomal 30S subunits but not for 70S ribosomes. The chain is Ribosome maturation factor RimM from Francisella tularensis subsp. tularensis (strain FSC 198).